A 562-amino-acid polypeptide reads, in one-letter code: NAD-dependent malic enzyme (562 aa).

The active-site Proton donor is the Tyr101. Arg154 lines the NAD(+) pocket. The active-site Proton acceptor is Lys172. A divalent metal cation-binding residues include Glu243, Asp244, and Asp267. 2 residues coordinate NAD(+): Asp267 and Asn415.

It belongs to the malic enzymes family. Homotetramer. It depends on Mg(2+) as a cofactor. Mn(2+) serves as cofactor.

The enzyme catalyses (S)-malate + NAD(+) = pyruvate + CO2 + NADH. It carries out the reaction oxaloacetate + H(+) = pyruvate + CO2. The protein is NAD-dependent malic enzyme of Idiomarina loihiensis (strain ATCC BAA-735 / DSM 15497 / L2-TR).